Reading from the N-terminus, the 416-residue chain is Choline/ethanolaminephosphotransferase 1 (416 aa).

A disordered region spans residues 1-20 (MSGHRSTRKRCGDSHPESPV). Residue Ser18 is modified to Phosphoserine. Thr40 is modified (phosphothreonine). Asn86 contacts CDP-choline. 2 consecutive transmembrane segments (helical) span residues 89–108 (TIIGLSINICTTILLVFYCP) and 116–133 (LWAYIACACGLFIYQSLD). Residue Asp133 coordinates Mg(2+). N-linked (GlcNAc...) asparagine glycosylation occurs at Asn144. Position 151 (Glu151) interacts with CDP-choline. Asp154 is a binding site for Mg(2+). His155 (proton acceptor) is an active-site residue. The next 8 membrane-spanning stretches (helical) occupy residues 156–176 (GCDSLSTVFVVLGTCIAVQLG), 180–199 (DWMFFCCFAGTFMFYCAHWQ), 210–230 (IIDVTEVQIFIIIMHLLAVIG), 246–267 (MKIFPALCTVAGTIFSCTNYFR), 286–306 (VLSPFLHIGSVITLAAMIYKK), 315–334 (HPCLYILTFGFVSAKITNKL), 349–363 (TAFIGPALLFLDQYF), and 368–388 (DEYIVLWIALVFSFFDLIRYC). Asp158 is a binding site for Mg(2+).

The protein belongs to the CDP-alcohol phosphatidyltransferase class-I family. Homodimer. Mg(2+) is required as a cofactor. It depends on Mn(2+) as a cofactor. As to expression, ubiquitously expressed.

Its subcellular location is the endoplasmic reticulum membrane. It is found in the nucleus membrane. It catalyses the reaction CDP-ethanolamine + a 1,2-diacyl-sn-glycerol = a 1,2-diacyl-sn-glycero-3-phosphoethanolamine + CMP + H(+). The catalysed reaction is CDP-choline + a 1,2-diacyl-sn-glycerol = a 1,2-diacyl-sn-glycero-3-phosphocholine + CMP + H(+). It carries out the reaction 1-O-alkyl-2-acyl-sn-glycerol + CDP-choline = a 1-O-alkyl-2-acyl-sn-glycero-3-phosphocholine + CMP + H(+). The enzyme catalyses a 1-O-(1Z-alkenyl)-2-acyl-sn-glycerol + CDP-choline = a 1-O-(1Z-alkenyl)-2-acyl-sn-glycero-3-phosphocholine + CMP + H(+). It catalyses the reaction 1,2-dioctanoyl-sn-glycerol + CDP-choline = 1,2-dioctanoyl-sn-glycero-3-phosphocholine + CMP + H(+). The catalysed reaction is 1,2-didecanoyl-sn-glycerol + CDP-choline = 1,2-didecanoyl-sn-glycero-3-phosphocholine + CMP + H(+). It carries out the reaction CDP-choline + 1,2-di-(9Z-octadecenoyl)-sn-glycerol = 1,2-di-(9Z-octadecenoyl)-sn-glycero-3-phosphocholine + CMP + H(+). The enzyme catalyses 1-hexadecanoyl-2-(9Z-octadecenoyl)-sn-glycerol + CDP-choline = 1-hexadecanoyl-2-(9Z-octadecenoyl)-sn-glycero-3-phosphocholine + CMP + H(+). It catalyses the reaction CDP-ethanolamine + 1,2-di-(9Z-octadecenoyl)-sn-glycerol = 1,2-di-(9Z-octadecenoyl)-sn-glycero-3-phosphoethanolamine + CMP + H(+). The catalysed reaction is 1-hexadecanoyl-2-(9Z-octadecenoyl)-sn-glycerol + CDP-ethanolamine = 1-hexadecanoyl-2-(9Z-octadecenoyl)-sn-glycero-3-phosphoethanolamine + CMP + H(+). It carries out the reaction 1-hexadecanoyl-2-(4Z,7Z,10Z,13Z,16Z,19Z-docosahexaenoyl)-sn-glycerol + CDP-choline = 1-hexadecanoyl-2-(4Z,7Z,10Z,13Z,16Z,19Z-docosahexaenoyl)-sn-glycero-3-phosphocholine + CMP + H(+). The enzyme catalyses 1,2-di-(9Z-hexadecenoyl)-sn-glycerol + CDP-choline = 1,2-di-(9Z-hexadecenoyl)-sn-glycero-3-phosphocholine + CMP + H(+). It catalyses the reaction 1,2-di-(9Z-hexadecenoyl)-sn-glycerol + CDP-ethanolamine = 1,2-di-(9Z-hexadecenoyl)-sn-glycero-3-phosphoethanolamine + CMP + H(+). The catalysed reaction is 1-O-hexadecyl-2-acetyl-sn-glycerol + CDP-choline = 1-O-hexadecyl-2-acetyl-sn-glycero-3-phosphocholine + CMP + H(+). It carries out the reaction 1-O-hexadecyl-2-(5Z,8Z,11Z,14Z-eicosatetraenoyl)-sn-glycerol + CDP-choline = 1-O-hexadecyl-2-(5Z,8Z,11Z,14Z)-eicosatetraenoyl-sn-glycero-3-phosphocholine + CMP + H(+). It participates in phospholipid metabolism; phosphatidylethanolamine biosynthesis; phosphatidylethanolamine from ethanolamine: step 3/3. The protein operates within phospholipid metabolism; phosphatidylcholine biosynthesis; phosphatidylcholine from phosphocholine: step 2/2. Its function is as follows. Catalyzes both phosphatidylcholine and phosphatidylethanolamine biosynthesis from CDP-choline and CDP-ethanolamine, respectively. Involved in protein-dependent process of phospholipid transport to distribute phosphatidyl choline to the lumenal surface. Has a higher cholinephosphotransferase activity than ethanolaminephosphotransferase activity. The polypeptide is Choline/ethanolaminephosphotransferase 1 (Homo sapiens (Human)).